The chain runs to 217 residues: MSIGVLVFPGSNCDRDVQWATEGCLGMPTRRIWHEETDLSGLDAVVLPGGFSYGDYLRCGAIARFAPALQALLGFAAQGGRVLGICNGFQVLTELGLLPGALTRNRDLHFICEDAPLQVVSSRTPWLEHYGTDKALTLPIAHGEGRYQCSDDTLKQLQDADAIALRYQANPNGSVADIAGITNDSGNVLGLMPHPERACDPATGGTDGRVLLQGLLS.

Positions 2–217 constitute a Glutamine amidotransferase type-1 domain; that stretch reads SIGVLVFPGS…GRVLLQGLLS (216 aa). Cys-86 (nucleophile) is an active-site residue. Active-site residues include His-194 and Glu-196.

In terms of assembly, part of the FGAM synthase complex composed of 1 PurL, 1 PurQ and 2 PurS subunits.

It localises to the cytoplasm. It catalyses the reaction N(2)-formyl-N(1)-(5-phospho-beta-D-ribosyl)glycinamide + L-glutamine + ATP + H2O = 2-formamido-N(1)-(5-O-phospho-beta-D-ribosyl)acetamidine + L-glutamate + ADP + phosphate + H(+). The catalysed reaction is L-glutamine + H2O = L-glutamate + NH4(+). It functions in the pathway purine metabolism; IMP biosynthesis via de novo pathway; 5-amino-1-(5-phospho-D-ribosyl)imidazole from N(2)-formyl-N(1)-(5-phospho-D-ribosyl)glycinamide: step 1/2. In terms of biological role, part of the phosphoribosylformylglycinamidine synthase complex involved in the purines biosynthetic pathway. Catalyzes the ATP-dependent conversion of formylglycinamide ribonucleotide (FGAR) and glutamine to yield formylglycinamidine ribonucleotide (FGAM) and glutamate. The FGAM synthase complex is composed of three subunits. PurQ produces an ammonia molecule by converting glutamine to glutamate. PurL transfers the ammonia molecule to FGAR to form FGAM in an ATP-dependent manner. PurS interacts with PurQ and PurL and is thought to assist in the transfer of the ammonia molecule from PurQ to PurL. This is Phosphoribosylformylglycinamidine synthase subunit PurQ from Parasynechococcus marenigrum (strain WH8102).